Reading from the N-terminus, the 309-residue chain is tRNA pseudouridine synthase B (309 aa).

The Nucleophile role is filled by Asp52.

This sequence belongs to the pseudouridine synthase TruB family. Type 1 subfamily.

The enzyme catalyses uridine(55) in tRNA = pseudouridine(55) in tRNA. Responsible for synthesis of pseudouridine from uracil-55 in the psi GC loop of transfer RNAs. The chain is tRNA pseudouridine synthase B from Leptospira interrogans serogroup Icterohaemorrhagiae serovar copenhageni (strain Fiocruz L1-130).